The following is a 193-amino-acid chain: Alpha-S2-casein (193 aa).

The signal sequence occupies residues 1–15; that stretch reads MKFFIFTCLLAVVLA. 10 positions are modified to phosphoserine: serine 23, serine 24, serine 25, serine 28, serine 47, serine 68, serine 123, serine 125, serine 128, and serine 136.

This sequence belongs to the alpha-casein family. As to expression, mammary gland specific. Secreted in milk.

The protein resides in the secreted. Its function is as follows. Important role in the capacity of milk to transport calcium phosphate. The sequence is that of Alpha-S2-casein (CSN1S2) from Camelus dromedarius (Dromedary).